We begin with the raw amino-acid sequence, 185 residues long: Ribosome-recycling factor (185 aa).

The protein belongs to the RRF family.

It is found in the cytoplasm. Its function is as follows. Responsible for the release of ribosomes from messenger RNA at the termination of protein biosynthesis. May increase the efficiency of translation by recycling ribosomes from one round of translation to another. The polypeptide is Ribosome-recycling factor (Streptomyces avermitilis (strain ATCC 31267 / DSM 46492 / JCM 5070 / NBRC 14893 / NCIMB 12804 / NRRL 8165 / MA-4680)).